The sequence spans 243 residues: Pyridoxine 5'-phosphate synthase (243 aa).

Residue Asn6 coordinates 3-amino-2-oxopropyl phosphate. Residue 8–9 (DH) participates in 1-deoxy-D-xylulose 5-phosphate binding. Arg17 contacts 3-amino-2-oxopropyl phosphate. Residue His42 is the Proton acceptor of the active site. Residues Arg44 and His49 each coordinate 1-deoxy-D-xylulose 5-phosphate. The active-site Proton acceptor is the Glu72. 1-deoxy-D-xylulose 5-phosphate is bound at residue Thr102. His192 (proton donor) is an active-site residue. Residues Gly193 and 214-215 (GH) contribute to the 3-amino-2-oxopropyl phosphate site.

The protein belongs to the PNP synthase family. In terms of assembly, homooctamer; tetramer of dimers.

The protein localises to the cytoplasm. It carries out the reaction 3-amino-2-oxopropyl phosphate + 1-deoxy-D-xylulose 5-phosphate = pyridoxine 5'-phosphate + phosphate + 2 H2O + H(+). Its pathway is cofactor biosynthesis; pyridoxine 5'-phosphate biosynthesis; pyridoxine 5'-phosphate from D-erythrose 4-phosphate: step 5/5. Its function is as follows. Catalyzes the complicated ring closure reaction between the two acyclic compounds 1-deoxy-D-xylulose-5-phosphate (DXP) and 3-amino-2-oxopropyl phosphate (1-amino-acetone-3-phosphate or AAP) to form pyridoxine 5'-phosphate (PNP) and inorganic phosphate. This chain is Pyridoxine 5'-phosphate synthase, found in Sulfurihydrogenibium sp. (strain YO3AOP1).